The primary structure comprises 284 residues: Putative ABC transporter ATP-binding protein MG468.1 homolog (284 aa).

The 232-residue stretch at 53 to 284 folds into the ABC transporter domain; the sequence is VLFKGVCKAV…PKTINEINWV (232 aa). 89–96 lines the ATP pocket; sequence GKSGSGKT.

This sequence belongs to the ABC transporter superfamily.

This chain is Putative ABC transporter ATP-binding protein MG468.1 homolog, found in Mycoplasma pneumoniae (strain ATCC 29342 / M129 / Subtype 1) (Mycoplasmoides pneumoniae).